The primary structure comprises 344 residues: Holliday junction branch migration complex subunit RuvB (344 aa).

The interval 1–182 (MSDRLISATA…FGIISRLEFY (182 aa)) is large ATPase domain (RuvB-L). Residues leucine 21, arginine 22, glycine 63, lysine 66, threonine 67, threonine 68, 129-131 (EDF), arginine 172, tyrosine 182, and arginine 219 contribute to the ATP site. Position 67 (threonine 67) interacts with Mg(2+). The interval 183–253 (NNEDLTRIVT…VAAEALEFFE (71 aa)) is small ATPAse domain (RuvB-S). The tract at residues 256-344 (PLGLDHTDRR…QKGLEQNSLF (89 aa)) is head domain (RuvB-H). 2 residues coordinate DNA: arginine 311 and arginine 316.

Belongs to the RuvB family. As to quaternary structure, homohexamer. Forms an RuvA(8)-RuvB(12)-Holliday junction (HJ) complex. HJ DNA is sandwiched between 2 RuvA tetramers; dsDNA enters through RuvA and exits via RuvB. An RuvB hexamer assembles on each DNA strand where it exits the tetramer. Each RuvB hexamer is contacted by two RuvA subunits (via domain III) on 2 adjacent RuvB subunits; this complex drives branch migration. In the full resolvosome a probable DNA-RuvA(4)-RuvB(12)-RuvC(2) complex forms which resolves the HJ.

The protein resides in the cytoplasm. It carries out the reaction ATP + H2O = ADP + phosphate + H(+). In terms of biological role, the RuvA-RuvB-RuvC complex processes Holliday junction (HJ) DNA during genetic recombination and DNA repair, while the RuvA-RuvB complex plays an important role in the rescue of blocked DNA replication forks via replication fork reversal (RFR). RuvA specifically binds to HJ cruciform DNA, conferring on it an open structure. The RuvB hexamer acts as an ATP-dependent pump, pulling dsDNA into and through the RuvAB complex. RuvB forms 2 homohexamers on either side of HJ DNA bound by 1 or 2 RuvA tetramers; 4 subunits per hexamer contact DNA at a time. Coordinated motions by a converter formed by DNA-disengaged RuvB subunits stimulates ATP hydrolysis and nucleotide exchange. Immobilization of the converter enables RuvB to convert the ATP-contained energy into a lever motion, pulling 2 nucleotides of DNA out of the RuvA tetramer per ATP hydrolyzed, thus driving DNA branch migration. The RuvB motors rotate together with the DNA substrate, which together with the progressing nucleotide cycle form the mechanistic basis for DNA recombination by continuous HJ branch migration. Branch migration allows RuvC to scan DNA until it finds its consensus sequence, where it cleaves and resolves cruciform DNA. The protein is Holliday junction branch migration complex subunit RuvB of Desulforamulus reducens (strain ATCC BAA-1160 / DSM 100696 / MI-1) (Desulfotomaculum reducens).